Reading from the N-terminus, the 267-residue chain is MSYFEAFILALIQGLTEFLPISSSAHLILPSAIFGWADQGLAFDVAVHVGTLMAVVIYFRHEVITLFRALFASIFKGDRSKEAKLAWMIVIATIPACVFGLLMKDVIEVYLRSAYVIATTTIVFGLLLWWVDKNAKLVADEYQTGWKKAVFIGIAQALAMIPGTSRSGATITAALYLGFTREAAARFSFLMSIPIITLAGSYLGMKLVTSGEPVHVGFLLTGILTSFISAYICIHFFLKMISRMGMTPFVIYRLILGVGLFAFLLSA.

Helical transmembrane passes span 1–21 (MSYF…FLPI), 39–59 (QGLA…VIYF), 83–103 (AKLA…GLLM), 111–131 (LRSA…LWWV), 144–164 (TGWK…IPGT), 189–209 (FLMS…KLVT), 218–238 (FLLT…HFFL), and 245–265 (GMTP…AFLL).

This sequence belongs to the UppP family.

The protein resides in the cell inner membrane. It carries out the reaction di-trans,octa-cis-undecaprenyl diphosphate + H2O = di-trans,octa-cis-undecaprenyl phosphate + phosphate + H(+). Catalyzes the dephosphorylation of undecaprenyl diphosphate (UPP). Confers resistance to bacitracin. This Vibrio parahaemolyticus serotype O3:K6 (strain RIMD 2210633) protein is Undecaprenyl-diphosphatase.